Here is a 207-residue protein sequence, read N- to C-terminus: Probable GTP-binding protein EngB (207 aa).

An EngB-type G domain is found at 22–194 (DLPEIAFAGR…WRRIEEVLPA (173 aa)). Residues 30–37 (GRSNVGKS), 57–61 (GRTQL), 75–78 (DLPG), 142–145 (TKCD), and 173–175 (FSA) contribute to the GTP site. Residues Ser37 and Thr59 each coordinate Mg(2+).

It belongs to the TRAFAC class TrmE-Era-EngA-EngB-Septin-like GTPase superfamily. EngB GTPase family. It depends on Mg(2+) as a cofactor.

In terms of biological role, necessary for normal cell division and for the maintenance of normal septation. The chain is Probable GTP-binding protein EngB from Geotalea daltonii (strain DSM 22248 / JCM 15807 / FRC-32) (Geobacter daltonii).